The chain runs to 330 residues: GDP-mannose transporter (330 aa).

The Cytoplasmic segment spans residues 1-13 (MSQLKVDNGPLSH). A helical membrane pass occupies residues 14-34 (VANSGPISIGAYCFSSIMMTV). Over 35–48 (TNKFVVNLKGFNMN) the chain is Lumenal. A helical membrane pass occupies residues 49–69 (FVMLFVQAAVCVNLLFFLRLL). The Cytoplasmic segment spans residues 70-81 (GYAKFRPLNRTD). Residues 82–98 (AKNWFPITIFLVLMIYT) traverse the membrane as a helical segment. Topologically, residues 99 to 104 (SSKSLQ) are lumenal. The chain crosses the membrane as a helical span at residues 105 to 124 (YLAVPIYTIFKNLTIILIAY). The Cytoplasmic segment spans residues 125–138 (GEVLFFGGSVTAME). A helical membrane pass occupies residues 139-155 (LSSFLLMVLSSVVATLG). At 156 to 170 (DQQALKKTADAGASL) the chain is on the lumenal side. The helical transmembrane segment at 171–191 (FNIGYMWMFINCLSSAAFVLV) threads the bilayer. Over 192-203 (MRKRIKLTNFKD) the chain is Cytoplasmic. Residues 204 to 224 (FDTMFYNNILSMPVLLALSFL) form a helical membrane-spanning segment. The Lumenal portion of the chain corresponds to 225–241 (MEDWSTENLTKNLSRDS). A helical membrane pass occupies residues 242-262 (VTAMIISGMTAVCISYCSGWC). Residues 263 to 269 (VRVTSST) lie on the Cytoplasmic side of the membrane. The helical transmembrane segment at 270–290 (TYSMVGALNKLPIALSGLIFF) threads the bilayer. Residues 291 to 294 (DAPK) lie on the Lumenal side of the membrane. The helical transmembrane segment at 295–315 (NFLSIFSIFLGFLSGIVYAVA) threads the bilayer. At 316 to 330 (KQKKQQNPQPSAPIK) the chain is on the cytoplasmic side.

This sequence belongs to the TPT transporter family. SLC35D subfamily. Homooligomer.

Its subcellular location is the golgi apparatus membrane. The protein resides in the cytoplasmic vesicle membrane. It localises to the endoplasmic reticulum membrane. In terms of biological role, involved in the import of GDP-mannose from the cytoplasm into the Golgi lumen. The sequence is that of GDP-mannose transporter (VRG4) from Kluyveromyces lactis (strain ATCC 8585 / CBS 2359 / DSM 70799 / NBRC 1267 / NRRL Y-1140 / WM37) (Yeast).